The sequence spans 236 residues: Small ribosomal subunit protein uS2c (236 aa).

This sequence belongs to the universal ribosomal protein uS2 family.

It is found in the plastid. It localises to the chloroplast. This is Small ribosomal subunit protein uS2c (rps2) from Lotus japonicus (Lotus corniculatus var. japonicus).